The sequence spans 617 residues: Probable Xaa-Pro aminopeptidase P (617 aa).

Mn(2+) contacts are provided by aspartate 414, aspartate 425, glutamate 523, and glutamate 537.

It belongs to the peptidase M24B family. Requires Mn(2+) as cofactor.

It catalyses the reaction Release of any N-terminal amino acid, including proline, that is linked to proline, even from a dipeptide or tripeptide.. In terms of biological role, catalyzes the removal of a penultimate prolyl residue from the N-termini of peptides. The protein is Probable Xaa-Pro aminopeptidase P (AMPP) of Blastomyces gilchristii (strain SLH14081) (Blastomyces dermatitidis).